The following is a 479-amino-acid chain: Adenylate kinase 8 (479 aa).

Adenylate kinase stretches follow at residues 58-258 (PKVV…TYVQ) and 269-471 (PKVL…SGII). 67 to 72 (ASGKTT) serves as a coordination point for ATP. Positions 87–113 (TKESLLEREFSRLSVEAKSYYQVYKKI) are NMP 1. Residues 140–143 (GIPE), glutamine 147, and arginine 203 each bind AMP. The interval 177-206 (GKRIDPVTGEIYHTTFDWPPEPEIQNRLRQ) is LID 1. 278–283 (GSGKRL) contacts ATP. The tract at residues 298 to 327 (SCGQLLKEAVAAKSSFGELIQPFFEKRMTV) is NMP 2. AMP is bound by residues 325–327 (MTV), 354–357 (GFPR), and glutamine 361. The segment at 391-424 (LRRTDPVTGERFHLMYKPPPTIEVQVRLLQNPKD) is LID 2. Position 392 (arginine 392) interacts with ATP.

Belongs to the adenylate kinase family. In terms of assembly, interacts with CFAP45 and CFAP52; CFAP45 and AK8 dimerization may create a cavity at the interface of the dimer that can accommodate AMP.

Its subcellular location is the cytoplasm. The protein resides in the cytosol. The protein localises to the cytoskeleton. It localises to the cilium axoneme. It catalyses the reaction AMP + ATP = 2 ADP. It carries out the reaction a 2'-deoxyribonucleoside 5'-diphosphate + ATP = a 2'-deoxyribonucleoside 5'-triphosphate + ADP. The catalysed reaction is a ribonucleoside 5'-diphosphate + ATP = a ribonucleoside 5'-triphosphate + ADP. Its function is as follows. Nucleoside monophosphate (NMP) kinase that catalyzes the reversible transfer of the terminal phosphate group between nucleoside triphosphates and monophosphates. Has highest activity toward AMP, and weaker activity toward dAMP, CMP and dCMP. Also displays broad nucleoside diphosphate kinase activity. This Mus musculus (Mouse) protein is Adenylate kinase 8 (Ak8).